The sequence spans 209 residues: tRNA(Phe) 7-((3-amino-3-carboxypropyl)-4-demethylwyosine(37)-N(4))-methyltransferase (209 aa).

Belongs to the TYW3 family.

The enzyme catalyses 4-demethyl-7-[(3S)-3-amino-3-carboxypropyl]wyosine(37) in tRNA(Phe) + S-adenosyl-L-methionine = 7-[(3S)-3-amino-3-carboxypropyl]wyosine(37) in tRNA(Phe) + S-adenosyl-L-homocysteine + H(+). S-adenosyl-L-methionine-dependent methyltransferase that acts as a component of the wyosine derivatives biosynthesis pathway. Probably methylates N-4 position of wybutosine-86 to produce wybutosine-72. The polypeptide is tRNA(Phe) 7-((3-amino-3-carboxypropyl)-4-demethylwyosine(37)-N(4))-methyltransferase (Saccharolobus solfataricus (strain ATCC 35092 / DSM 1617 / JCM 11322 / P2) (Sulfolobus solfataricus)).